Reading from the N-terminus, the 354-residue chain is Homeobox protein Nkx-2.4 (354 aa).

Residues 188 to 247 constitute a DNA-binding region (homeobox); that stretch reads RRKRRVLFSQAQVYELERRFKQQKYLSAPEREHLASMIHLTPTQVKIWFQNHRYKMKRQA. The tract at residues 245-329 is disordered; that stretch reads RQAKDKAAQQ…PALHGPGGGL (85 aa). A compositionally biased stretch (pro residues) spans 262-272; the sequence is GPPPPPPPPSP. A compositionally biased stretch (low complexity) spans 290–304; it reads GAGTPTPGQGGQQPQ.

This sequence belongs to the NK-2 homeobox family. In terms of tissue distribution, in the embryo it is detected in the posterior hypothalamus and later in the head. In the adult it is detected only in testis.

The protein localises to the nucleus. Functionally, probable transcription factor. The polypeptide is Homeobox protein Nkx-2.4 (Nkx2-4) (Mus musculus (Mouse)).